Here is a 388-residue protein sequence, read N- to C-terminus: Flap endonuclease 1 (388 aa).

Positions M1 to R104 are N-domain. D34 serves as a coordination point for Mg(2+). R47 and R70 together coordinate DNA. Mg(2+) contacts are provided by D86, E158, E160, D179, and D181. The tract at residues E122 to Y253 is I-domain. E158 is a DNA binding site. The DNA site is built by G231 and D233. D233 is a Mg(2+) binding site. An interaction with PCNA region spans residues T336–F344. Residues P351–K388 form a disordered region.

The protein belongs to the XPG/RAD2 endonuclease family. FEN1 subfamily. In terms of assembly, interacts with PCNA. Three molecules of FEN1 bind to one PCNA trimer with each molecule binding to one PCNA monomer. PCNA stimulates the nuclease activity without altering cleavage specificity. It depends on Mg(2+) as a cofactor. Phosphorylated. Phosphorylation upon DNA damage induces relocalization to the nuclear plasma.

Its subcellular location is the nucleus. The protein localises to the nucleolus. It is found in the nucleoplasm. The protein resides in the mitochondrion. In terms of biological role, structure-specific nuclease with 5'-flap endonuclease and 5'-3' exonuclease activities involved in DNA replication and repair. During DNA replication, cleaves the 5'-overhanging flap structure that is generated by displacement synthesis when DNA polymerase encounters the 5'-end of a downstream Okazaki fragment. It enters the flap from the 5'-end and then tracks to cleave the flap base, leaving a nick for ligation. Also involved in the long patch base excision repair (LP-BER) pathway, by cleaving within the apurinic/apyrimidinic (AP) site-terminated flap. Acts as a genome stabilization factor that prevents flaps from equilibrating into structures that lead to duplications and deletions. Also possesses 5'-3' exonuclease activity on nicked or gapped double-stranded DNA, and exhibits RNase H activity. Also involved in replication and repair of rDNA and in repairing mitochondrial DNA. The chain is Flap endonuclease 1 from Drosophila mojavensis (Fruit fly).